The sequence spans 494 residues: MQISKAALLASLAALVYAQPVTLFKRETNADKWRSQSIYQIVTDRFARTDGDTSASCNTEDRLYCGGSFQGIIKKLDYIKDMGFTAIWISPVVENIPDNTAYGYAYHGYWMKNIYKINENFGTADDLKSLAQELHDRDMLLMVDIVTNHYGSDGSGDSIDYSEYTPFNDQKYFHNYCLISNYDDQAQVQSCWEGDSSVALPDLRTEDSDVASVFNSWVKDFVGNYSIDGLRIDSAKHVDQGFFPDFVSASGVYSVGEVFQGDPAYTCPYQNYIPGVSNYPLYYPTTRFFKTTDSSSSELTQMISSVASSCSDPTLLTNFVENHDNERFASMTSDQSLISNAIAFVLLGDGIPVIYYGQEQGLSGKSDPNNREALWLSGYNKESDYYKLIAKANAARNAAVYQDSSYATSQLSVIFSNDHVIATKRGSVVSVFNNLGSSGSSDVTISNTGYSSGEDLVEVLTCSTVSGSSDLQVSIQGGQPQIFVPAKYASDICS.

The first 26 residues, 1–26 (MQISKAALLASLAALVYAQPVTLFKR), serve as a signal peptide directing secretion. A disulfide bond links Cys-57 and Cys-65. Residue Trp-110 coordinates substrate. Asn-148 provides a ligand contact to Ca(2+). Residue His-149 participates in substrate binding. A disulfide bridge connects residues Cys-177 and Cys-191. Asp-202 is a Ca(2+) binding site. N-linked (GlcNAc...) asparagine glycosylation is present at Asn-224. Arg-231 is a substrate binding site. Ca(2+) contacts are provided by Asp-233, His-237, and Glu-257. Asp-233 functions as the Nucleophile in the catalytic mechanism. 236–237 (KH) is a binding site for substrate. Residue Glu-257 is the Proton donor of the active site. Residue Gly-261 coordinates substrate. Cys-267 and Cys-310 are disulfide-bonded. Substrate is bound by residues Asp-324 and Arg-371. Cys-462 and Cys-493 are disulfide-bonded.

Belongs to the glycosyl hydrolase 13 family. Requires Ca(2+) as cofactor.

Its subcellular location is the secreted. The enzyme catalyses Endohydrolysis of (1-&gt;4)-alpha-D-glucosidic linkages in polysaccharides containing three or more (1-&gt;4)-alpha-linked D-glucose units.. The sequence is that of Alpha-amylase (ALP1) from Saccharomycopsis fibuligera (Yeast).